The chain runs to 375 residues: Tryptophan--tRNA ligase (375 aa).

Positions 81-89 match the 'HIGH' region motif; the sequence is PSGPVHIGH. The short motif at 258 to 262 is the 'KMSKS' region element; it reads KMSAS.

The protein belongs to the class-I aminoacyl-tRNA synthetase family.

The protein localises to the cytoplasm. The catalysed reaction is tRNA(Trp) + L-tryptophan + ATP = L-tryptophyl-tRNA(Trp) + AMP + diphosphate + H(+). The sequence is that of Tryptophan--tRNA ligase from Pyrobaculum aerophilum (strain ATCC 51768 / DSM 7523 / JCM 9630 / CIP 104966 / NBRC 100827 / IM2).